Here is a 322-residue protein sequence, read N- to C-terminus: HPr kinase/phosphorylase (322 aa).

Residues His146 and Lys167 contribute to the active site. 161–168 (GDSGLGKS) contributes to the ATP binding site. Ser168 is a Mg(2+) binding site. Catalysis depends on Asp185, which acts as the Proton acceptor; for phosphorylation activity. Proton donor; for dephosphorylation activity. The tract at residues 209–218 (LEVRGLGLLD) is important for the catalytic mechanism of both phosphorylation and dephosphorylation. Position 210 (Glu210) interacts with Mg(2+). The active site involves Arg250. An important for the catalytic mechanism of dephosphorylation region spans residues 271–276 (QVAAGR).

Belongs to the HPrK/P family. In terms of assembly, homohexamer. Mg(2+) serves as cofactor.

The enzyme catalyses [HPr protein]-L-serine + ATP = [HPr protein]-O-phospho-L-serine + ADP + H(+). It catalyses the reaction [HPr protein]-O-phospho-L-serine + phosphate + H(+) = [HPr protein]-L-serine + diphosphate. Catalyzes the ATP- as well as the pyrophosphate-dependent phosphorylation of a specific serine residue in HPr, a phosphocarrier protein of the phosphoenolpyruvate-dependent sugar phosphotransferase system (PTS). HprK/P also catalyzes the pyrophosphate-producing, inorganic phosphate-dependent dephosphorylation (phosphorolysis) of seryl-phosphorylated HPr (P-Ser-HPr). This Burkholderia cenocepacia (strain HI2424) protein is HPr kinase/phosphorylase.